The primary structure comprises 152 residues: Sec-independent protein translocase protein TatB (152 aa).

Residues 1-21 (MLDVGFGELFCFGIIALLVLG) traverse the membrane as a helical segment.

It belongs to the TatB family. In terms of assembly, the Tat system comprises two distinct complexes: a TatABC complex, containing multiple copies of TatA, TatB and TatC subunits, and a separate TatA complex, containing only TatA subunits. Substrates initially bind to the TatABC complex, which probably triggers association of the separate TatA complex to form the active translocon.

It localises to the cell inner membrane. Its function is as follows. Part of the twin-arginine translocation (Tat) system that transports large folded proteins containing a characteristic twin-arginine motif in their signal peptide across membranes. Together with TatC, TatB is part of a receptor directly interacting with Tat signal peptides. TatB may form an oligomeric binding site that transiently accommodates folded Tat precursor proteins before their translocation. This is Sec-independent protein translocase protein TatB from Acinetobacter baylyi (strain ATCC 33305 / BD413 / ADP1).